The sequence spans 108 residues: Pumilarin (108 aa).

Residues 1 to 38 (MTETKNEIKLHVLFGALAVGFLMLALFSFSLQMLPVAD) constitute a propeptide that is removed on maturation. A cross-link (cyclopeptide (Leu-Trp)) is located at residues 39 to 108 (LAKEFGIPGS…KKGRKAVIAW (70 aa)).

The cross-link permits a high resistance to proteolysis. Is more resistant to specific proteases than to unspecific proteases.

It localises to the secreted. Cyclopeptide antibiotic that inhibits both Gram-positive and Gram-negative bacteria. Shows potent to weak activities against M.flavus (MIC=3 ug/ml), B.cereus (MIC=12 ug/ml), B.pumilus (MIC=12 ug/ml), E.coli (MIC=12 ug/ml), and S.pneumoniae (MIC=47 ug/ml). May act by forming pores. This chain is Pumilarin, found in Bacillus safensis.